Reading from the N-terminus, the 316-residue chain is MQILLANPRGFCAGVDRAISIVENALAIYGAPIYVRHEVVHNRYVVDSLRERGAIFIEQISEVPDGAILIFSAHGVSQAVRNEAKSRDLTVFDATCPLVTKVHMEVARASRRGEESILIGHAGHPEVEGTMGQYSNPEGGMYLVESPDDVWKLTVKNEEKLSFMTQTTLSVDDTSDVIDALRKRFPKIVGPRKDDICYATTNRQEAVRALAEQAEVVLVVGSKNSSNSNRLAELAQRMGKSAFLIDDAKDIQEEWVKEVKCVGVTAGASAPDILVQNVVARLQQLGGGEAIPLEGREENIVFEVPKELRVDIREVD.

Cys-12 is a binding site for [4Fe-4S] cluster. Residues His-41 and His-74 each coordinate (2E)-4-hydroxy-3-methylbut-2-enyl diphosphate. His-41 and His-74 together coordinate dimethylallyl diphosphate. His-41 and His-74 together coordinate isopentenyl diphosphate. Cys-96 serves as a coordination point for [4Fe-4S] cluster. Residue His-124 coordinates (2E)-4-hydroxy-3-methylbut-2-enyl diphosphate. Dimethylallyl diphosphate is bound at residue His-124. His-124 lines the isopentenyl diphosphate pocket. Residue Glu-126 is the Proton donor of the active site. Position 167 (Thr-167) interacts with (2E)-4-hydroxy-3-methylbut-2-enyl diphosphate. Cys-197 provides a ligand contact to [4Fe-4S] cluster. Residues Ser-225, Ser-226, Asn-227, and Ser-269 each contribute to the (2E)-4-hydroxy-3-methylbut-2-enyl diphosphate site. Dimethylallyl diphosphate-binding residues include Ser-225, Ser-226, Asn-227, and Ser-269. Isopentenyl diphosphate contacts are provided by Ser-225, Ser-226, Asn-227, and Ser-269.

This sequence belongs to the IspH family. In terms of assembly, homodimer. It depends on [4Fe-4S] cluster as a cofactor.

The catalysed reaction is isopentenyl diphosphate + 2 oxidized [2Fe-2S]-[ferredoxin] + H2O = (2E)-4-hydroxy-3-methylbut-2-enyl diphosphate + 2 reduced [2Fe-2S]-[ferredoxin] + 2 H(+). It catalyses the reaction dimethylallyl diphosphate + 2 oxidized [2Fe-2S]-[ferredoxin] + H2O = (2E)-4-hydroxy-3-methylbut-2-enyl diphosphate + 2 reduced [2Fe-2S]-[ferredoxin] + 2 H(+). The protein operates within isoprenoid biosynthesis; dimethylallyl diphosphate biosynthesis; dimethylallyl diphosphate from (2E)-4-hydroxy-3-methylbutenyl diphosphate: step 1/1. It functions in the pathway isoprenoid biosynthesis; isopentenyl diphosphate biosynthesis via DXP pathway; isopentenyl diphosphate from 1-deoxy-D-xylulose 5-phosphate: step 6/6. Its function is as follows. Catalyzes the conversion of 1-hydroxy-2-methyl-2-(E)-butenyl 4-diphosphate (HMBPP) into a mixture of isopentenyl diphosphate (IPP) and dimethylallyl diphosphate (DMAPP). Acts in the terminal step of the DOXP/MEP pathway for isoprenoid precursor biosynthesis. This Escherichia coli (strain ATCC 8739 / DSM 1576 / NBRC 3972 / NCIMB 8545 / WDCM 00012 / Crooks) protein is 4-hydroxy-3-methylbut-2-enyl diphosphate reductase.